We begin with the raw amino-acid sequence, 317 residues long: Apolipoprotein E (317 aa).

Positions 1-18 (MKVLWVALVITLLAGCQA) are cleaved as a signal peptide. 8 tandem repeats follow at residues 80 to 101 (VLMD…EQLG), 102 to 123 (PVAQ…ARLA), 124 to 145 (SDMQ…AMMG), 146 to 167 (HTTD…KRLL), 168 to 189 (RDAE…EGSE), 190 to 211 (RSVS…ARAA), 212 to 233 (TVGT…QKLR), and 234 to 255 (GRVE…EQLD). Positions 80-255 (VLMDETMKEV…HLEEMREQLD (176 aa)) are 8 X 22 AA approximate tandem repeats. A Methionine sulfoxide modification is found at Met143. The LDL and other lipoprotein receptors binding stretch occupies residues 158–168 (HLRKLRKRLLR). 162-165 (LRKR) contacts heparin. Residues 210–290 (AATVGTLASQ…SWFEPLVEDM (81 aa)) are lipid-binding and lipoprotein association. 229–236 (HQKLRGRV) is a binding site for heparin. The interval 266–317 (TQMRLQAEAFQARLKSWFEPLVEDMQRQWAGLVEKVQLAMATSSTSAPSENH) is homooligomerization. The segment at 278 to 290 (RLKSWFEPLVEDM) is specificity for association with VLDL.

It belongs to the apolipoprotein A1/A4/E family. In terms of assembly, homotetramer. May interact with ABCA1; functionally associated with ABCA1 in the biogenesis of HDLs. May interact with APP/A4 amyloid-beta peptide; the interaction is extremely stable in vitro but its physiological significance is unclear. May interact with MAPT. May interact with MAP2. In the cerebrospinal fluid, interacts with secreted SORL1. Interacts with PMEL; this allows the loading of PMEL luminal fragment on ILVs to induce fibril nucleation. In terms of processing, APOE exists as multiple glycosylated and sialylated glycoforms within cells and in plasma. The extent of glycosylation and sialylation are tissue and context specific. Glycated in plasma VLDL. Post-translationally, phosphorylated by FAM20C in the extracellular medium.

It localises to the secreted. It is found in the extracellular space. The protein localises to the extracellular matrix. The protein resides in the extracellular vesicle. Its subcellular location is the endosome. It localises to the multivesicular body. In terms of biological role, APOE is an apolipoprotein, a protein associating with lipid particles, that mainly functions in lipoprotein-mediated lipid transport between organs via the plasma and interstitial fluids. APOE is a core component of plasma lipoproteins and is involved in their production, conversion and clearance. Apolipoproteins are amphipathic molecules that interact both with lipids of the lipoprotein particle core and the aqueous environment of the plasma. As such, APOE associates with chylomicrons, chylomicron remnants, very low density lipoproteins (VLDL) and intermediate density lipoproteins (IDL) but shows a preferential binding to high-density lipoproteins (HDL). It also binds a wide range of cellular receptors including the LDL receptor/LDLR and the very low-density lipoprotein receptor/VLDLR that mediate the cellular uptake of the APOE-containing lipoprotein particles. Finally, APOE also has a heparin-binding activity and binds heparan-sulfate proteoglycans on the surface of cells, a property that supports the capture and the receptor-mediated uptake of APOE-containing lipoproteins by cells. In Physeter macrocephalus (Sperm whale), this protein is Apolipoprotein E (APOE).